The chain runs to 513 residues: ATP synthase subunit alpha (513 aa).

169 to 176 is a binding site for ATP; sequence GDRQCGKT.

This sequence belongs to the ATPase alpha/beta chains family. F-type ATPases have 2 components, CF(1) - the catalytic core - and CF(0) - the membrane proton channel. CF(1) has five subunits: alpha(3), beta(3), gamma(1), delta(1), epsilon(1). CF(0) has three main subunits: a(1), b(2) and c(9-12). The alpha and beta chains form an alternating ring which encloses part of the gamma chain. CF(1) is attached to CF(0) by a central stalk formed by the gamma and epsilon chains, while a peripheral stalk is formed by the delta and b chains.

It localises to the cell inner membrane. The catalysed reaction is ATP + H2O + 4 H(+)(in) = ADP + phosphate + 5 H(+)(out). Its function is as follows. Produces ATP from ADP in the presence of a proton gradient across the membrane. The alpha chain is a regulatory subunit. In Burkholderia mallei (strain NCTC 10229), this protein is ATP synthase subunit alpha.